Here is a 223-residue protein sequence, read N- to C-terminus: tRNA (guanine-N(7)-)-methyltransferase (223 aa).

Residues Asp56, Asp81, Asp108, and Asp130 each contribute to the S-adenosyl-L-methionine site. Asp130 is an active-site residue. Positions 134 and 166 each coordinate substrate.

This sequence belongs to the class I-like SAM-binding methyltransferase superfamily. TrmB family.

It carries out the reaction guanosine(46) in tRNA + S-adenosyl-L-methionine = N(7)-methylguanosine(46) in tRNA + S-adenosyl-L-homocysteine. It functions in the pathway tRNA modification; N(7)-methylguanine-tRNA biosynthesis. Its function is as follows. Catalyzes the formation of N(7)-methylguanine at position 46 (m7G46) in tRNA. This is tRNA (guanine-N(7)-)-methyltransferase from Rubrobacter xylanophilus (strain DSM 9941 / JCM 11954 / NBRC 16129 / PRD-1).